A 398-amino-acid chain; its full sequence is MNGLAVKGPFVLGAALAERELAALLRRRTATDGSVGGRLQVAGRDYLNFSANDYLGLADHSTIKAAFKEGIDCYGTGSGASPLVTGYSRAHQQLEETLADWLGVEAVLLFNCGFSANQAVLKALLGKDHLLWQDRLNHASLQEMGSQLPCKMKRFGHNDMTALERQLEPNRGLIVSEGVFSMDGDQGPWPELARLAAQSGNWLMIDDAHGLGVLGPEGRGTLAAQGVAPASVHIQMGTFGKALGVAGAFVGGSRELVDYLVNFARHYVYSTHMPTAQACAVSKSIELVRAADESRAHLARLITRFRQGTAALGWQLGASDTPIQPLLVGESSAALQLAARLRDRGVWVSAIRPPTVPVGTARLRITLSAAHREQDVDRLLKALGPCSGSASWEGIHHG.

Arginine 26 serves as a coordination point for substrate. 113–114 (GF) is a binding site for pyridoxal 5'-phosphate. Residue histidine 138 coordinates substrate. Pyridoxal 5'-phosphate contacts are provided by serine 181, histidine 209, and threonine 238. Residue lysine 241 is modified to N6-(pyridoxal phosphate)lysine. Substrate is bound at residue threonine 355.

Belongs to the class-II pyridoxal-phosphate-dependent aminotransferase family. BioF subfamily. In terms of assembly, homodimer. Pyridoxal 5'-phosphate serves as cofactor.

The catalysed reaction is 6-carboxyhexanoyl-[ACP] + L-alanine + H(+) = (8S)-8-amino-7-oxononanoate + holo-[ACP] + CO2. Its pathway is cofactor biosynthesis; biotin biosynthesis. In terms of biological role, catalyzes the decarboxylative condensation of pimeloyl-[acyl-carrier protein] and L-alanine to produce 8-amino-7-oxononanoate (AON), [acyl-carrier protein], and carbon dioxide. This is 8-amino-7-oxononanoate synthase from Aeromonas salmonicida (strain A449).